The following is a 306-amino-acid chain: Ribonucleoside-diphosphate reductase small subunit (306 aa).

The Fe cation site is built by aspartate 66, glutamate 96, and histidine 99. Tyrosine 103 is a catalytic residue. A helical transmembrane segment spans residues 153–173; that stretch reads ILMILIEGIFFVSSFAAIAYL. Positions 159, 193, and 196 each coordinate Fe cation.

The protein belongs to the ribonucleoside diphosphate reductase small chain family. As to quaternary structure, heterotetramer composed of a homodimer of the large subunit (R1) and a homodimer of the small subunit (R2). Larger multisubunit protein complex are also active, composed of (R1)n(R2)n. It depends on Fe cation as a cofactor.

Its subcellular location is the host membrane. It carries out the reaction a 2'-deoxyribonucleoside 5'-diphosphate + [thioredoxin]-disulfide + H2O = a ribonucleoside 5'-diphosphate + [thioredoxin]-dithiol. In terms of biological role, ribonucleoside-diphosphate reductase holoenzyme provides the precursors necessary for viral DNA synthesis. Allows virus growth in non-dividing cells, as well as reactivation from latency in infected hosts. Catalyzes the biosynthesis of deoxyribonucleotides from the corresponding ribonucleotides. In Varicella-zoster virus (strain Dumas) (HHV-3), this protein is Ribonucleoside-diphosphate reductase small subunit.